A 257-amino-acid polypeptide reads, in one-letter code: 1-(5-phosphoribosyl)-5-[(5-phosphoribosylamino)methylideneamino] imidazole-4-carboxamide isomerase (257 aa).

Residue Asp-8 is the Proton acceptor of the active site. The active-site Proton donor is Asp-129.

This sequence belongs to the HisA/HisF family.

The protein resides in the cytoplasm. The catalysed reaction is 1-(5-phospho-beta-D-ribosyl)-5-[(5-phospho-beta-D-ribosylamino)methylideneamino]imidazole-4-carboxamide = 5-[(5-phospho-1-deoxy-D-ribulos-1-ylimino)methylamino]-1-(5-phospho-beta-D-ribosyl)imidazole-4-carboxamide. It participates in amino-acid biosynthesis; L-histidine biosynthesis; L-histidine from 5-phospho-alpha-D-ribose 1-diphosphate: step 4/9. The protein is 1-(5-phosphoribosyl)-5-[(5-phosphoribosylamino)methylideneamino] imidazole-4-carboxamide isomerase of Thermosynechococcus vestitus (strain NIES-2133 / IAM M-273 / BP-1).